Here is a 286-residue protein sequence, read N- to C-terminus: Alpha-ketoglutarate-dependent dioxygenase alkB homolog 3 (286 aa).

The disordered stretch occupies residues 1-38 (MEDKRRRARVQGAWAGPAKSQATAQPAPTAENNLQQRP). Residues 20–36 (SQATAQPAPTAENNLQQ) show a composition bias toward polar residues. Residues Trp115 and 141-143 (YTY) contribute to the substrate site. The 107-residue stretch at 172-278 (SFNSLLCNLY…RINLTFRTVY (107 aa)) folds into the Fe2OG dioxygenase domain. Leu177 is subject to (4R)-5-hydroxyleucine; alternate. Leu177 bears the (4R)-5-oxoleucine; alternate mark. Position 179–181 (179–181 (NLY)) interacts with 2-oxoglutarate. Residues His191 and Asp193 each coordinate Fe cation. Asp194 contacts substrate. Residue His257 coordinates Fe cation. 2-oxoglutarate-binding positions include 269–275 (RINLTFR) and Arg275.

Belongs to the alkB family. As to quaternary structure, interacts with the ASCC complex composed of ASCC1, ASCC2 and ASCC3. Interacts directly with ASCC3, and is thereby recruited to the ASCC complex. Interacts with OTUD4; the interaction is direct. Interacts with USP7 and USP9X. Requires Fe(2+) as cofactor. Post-translationally, ubiquitinated; undergoes 'Lys-48'-linked polyubiquitination. OTUD4 promotes USP7 and USP9X-dependent deubiquitination of 'Lys-48'-polyubiquitinated ALKBH3 promoting the repair of alkylated DNA lesions.

The protein resides in the nucleus. Its subcellular location is the cytoplasm. It carries out the reaction an N(1)-methyladenosine in mRNA + 2-oxoglutarate + O2 = an adenosine in mRNA + formaldehyde + succinate + CO2. The enzyme catalyses a methylated nucleobase within DNA + 2-oxoglutarate + O2 = a nucleobase within DNA + formaldehyde + succinate + CO2. The catalysed reaction is an N(1)-methyl-2'-deoxyadenosine in single-stranded DNA + 2-oxoglutarate + O2 = a 2'-deoxyadenosine in single-stranded DNA + formaldehyde + succinate + CO2 + H(+). It catalyses the reaction an N(3)-methyl-2'-deoxycytidine in single-stranded DNA + 2-oxoglutarate + O2 = a 2'-deoxycytidine in single-stranded DNA + formaldehyde + succinate + CO2 + H(+). It carries out the reaction a 3,N(4)-etheno-2'-deoxycytidine in single-stranded DNA + 2-oxoglutarate + O2 + H2O = a 2'-deoxycytidine in single-stranded DNA + glyoxal + succinate + CO2. With respect to regulation, activated by ascorbate. Its function is as follows. Dioxygenase that mediates demethylation of DNA and RNA containing 1-methyladenosine (m1A). Repairs alkylated DNA containing 1-methyladenosine (m1A) and 3-methylcytosine (m3C) by oxidative demethylation. Has a strong preference for single-stranded DNA. Able to process alkylated m3C within double-stranded regions via its interaction with ASCC3, which promotes DNA unwinding to generate single-stranded substrate needed for ALKBH3. Can repair exocyclic 3,N4-ethenocytosine adducs in single-stranded DNA. Also acts on RNA. Demethylates N(1)-methyladenosine (m1A) RNA, an epigenetic internal modification of messenger RNAs (mRNAs) highly enriched within 5'-untranslated regions (UTRs) and in the vicinity of start codons. Requires molecular oxygen, alpha-ketoglutarate and iron. The polypeptide is Alpha-ketoglutarate-dependent dioxygenase alkB homolog 3 (Bos taurus (Bovine)).